The sequence spans 145 residues: Putative pre-16S rRNA nuclease (145 aa).

It belongs to the YqgF nuclease family.

It is found in the cytoplasm. Functionally, could be a nuclease involved in processing of the 5'-end of pre-16S rRNA. The protein is Putative pre-16S rRNA nuclease of Sulfurihydrogenibium sp. (strain YO3AOP1).